The following is a 262-amino-acid chain: Hydroxyethylthiazole kinase (262 aa).

A substrate-binding site is contributed by methionine 50. ATP is bound by residues arginine 125 and threonine 171. Substrate is bound at residue glycine 198.

This sequence belongs to the Thz kinase family. Mg(2+) serves as cofactor.

It catalyses the reaction 5-(2-hydroxyethyl)-4-methylthiazole + ATP = 4-methyl-5-(2-phosphooxyethyl)-thiazole + ADP + H(+). It participates in cofactor biosynthesis; thiamine diphosphate biosynthesis; 4-methyl-5-(2-phosphoethyl)-thiazole from 5-(2-hydroxyethyl)-4-methylthiazole: step 1/1. Its function is as follows. Catalyzes the phosphorylation of the hydroxyl group of 4-methyl-5-beta-hydroxyethylthiazole (THZ). The sequence is that of Hydroxyethylthiazole kinase from Escherichia coli (strain SMS-3-5 / SECEC).